The following is a 93-amino-acid chain: MKKTLMLLAMVVALVILPFFINHGGEYGGSDGEAESQIQAIEPQYKPWFQPLYEPASGEIESLLFTLQGSLGAAVIFYILGYCKGKQRRDDRA.

2 consecutive transmembrane segments (helical) span residues leucine 5–glycine 25 and leucine 63–cysteine 83.

It belongs to the CbiN family. As to quaternary structure, forms an energy-coupling factor (ECF) transporter complex composed of an ATP-binding protein (A component, CbiO), a transmembrane protein (T component, CbiQ) and 2 possible substrate-capture proteins (S components, CbiM and CbiN) of unknown stoichimetry.

It localises to the cell inner membrane. It functions in the pathway cofactor biosynthesis; adenosylcobalamin biosynthesis. Functionally, part of the energy-coupling factor (ECF) transporter complex CbiMNOQ involved in cobalt import. This Salmonella gallinarum (strain 287/91 / NCTC 13346) protein is Cobalt transport protein CbiN.